The following is a 1025-amino-acid chain: Multidrug resistance protein MdtC (1025 aa).

12 helical membrane-spanning segments follow: residues 3 to 23 (FFAL…AITL), 333 to 353 (EVEQ…FLFL), 360 to 380 (IIPA…MYLC), 387 to 407 (LSLM…IVVL), 431 to 451 (VGFT…PLLL), 463 to 483 (FAVT…TLTP), 528 to 548 (LVGV…ISIP), 853 to 873 (VILI…LYES), 875 to 895 (VHPL…LLAL), 897 to 917 (LFNA…IGIV), 953 to 973 (PIMM…LSGG), and 984 to 1004 (ITIV…TPVV).

It belongs to the resistance-nodulation-cell division (RND) (TC 2.A.6) family. MdtC subfamily. In terms of assembly, part of a tripartite efflux system composed of MdtA, MdtB and MdtC. MdtC forms a heteromultimer with MdtB.

Its subcellular location is the cell inner membrane. The protein is Multidrug resistance protein MdtC of Shigella sonnei (strain Ss046).